We begin with the raw amino-acid sequence, 89 residues long: MSEGDSMKMVIRPRHMISLGGYIVELEFPYRNLIVVNPTDEHIKIEVPVFDEEWIEEHRKLGLKIVPVGDDDNYLSLWRREKALLEASD.

The protein to M.jannaschii MJ1436.

This is an uncharacterized protein from Methanothermobacter thermautotrophicus (strain ATCC 29096 / DSM 1053 / JCM 10044 / NBRC 100330 / Delta H) (Methanobacterium thermoautotrophicum).